Reading from the N-terminus, the 901-residue chain is Valine--tRNA ligase (901 aa).

Residues 1–37 (MLPGCYTHRLNMSDTQDPPQDESTTDESADALDGEYD) form a disordered region. Residues 19-35 (PQDESTTDESADALDGE) are compositionally biased toward acidic residues. Residues 72 to 82 (PTVSGNLHMGH) carry the 'HIGH' region motif. The 'KMSKS' region motif lies at 572–576 (AMSKS). Lys-575 is a binding site for ATP.

It belongs to the class-I aminoacyl-tRNA synthetase family. ValS type 2 subfamily.

It localises to the cytoplasm. The enzyme catalyses tRNA(Val) + L-valine + ATP = L-valyl-tRNA(Val) + AMP + diphosphate. Its function is as follows. Catalyzes the attachment of valine to tRNA(Val). As ValRS can inadvertently accommodate and process structurally similar amino acids such as threonine, to avoid such errors, it has a 'posttransfer' editing activity that hydrolyzes mischarged Thr-tRNA(Val) in a tRNA-dependent manner. This chain is Valine--tRNA ligase, found in Haloarcula marismortui (strain ATCC 43049 / DSM 3752 / JCM 8966 / VKM B-1809) (Halobacterium marismortui).